The following is a 428-amino-acid chain: YTH domain-containing protein ECT1 (428 aa).

The YTH domain maps to 245–382; sequence AKFFVIKSYS…EHGTKIIKIF (138 aa). Residues 251–253, D257, 267–268, N300, W324, W329, and W337 each bind RNA; these read KSY and WS.

In terms of assembly, interacts (via C-terminus) with CIPK1. As to expression, expressed in root apex, shoot apex, lateral root primordia, stamens, carpels and trichomes.

It localises to the nucleus. It is found in the cytoplasm. In terms of biological role, specifically recognizes and binds N6-methyladenosine (m6A)-containing RNAs, and regulates mRNA stability. M6A is a modification present at internal sites of mRNAs and some non-coding RNAs and plays a role in mRNA stability and processing. The protein is YTH domain-containing protein ECT1 of Arabidopsis thaliana (Mouse-ear cress).